Consider the following 421-residue polypeptide: UDP-N-acetylglucosamine 1-carboxyvinyltransferase (421 aa).

Residue 22-23 (KN) participates in phosphoenolpyruvate binding. Arginine 94 lines the UDP-N-acetyl-alpha-D-glucosamine pocket. Cysteine 118 (proton donor) is an active-site residue. Cysteine 118 is subject to 2-(S-cysteinyl)pyruvic acid O-phosphothioketal. UDP-N-acetyl-alpha-D-glucosamine is bound by residues 163-166 (KVSV), aspartate 308, and isoleucine 330.

The protein belongs to the EPSP synthase family. MurA subfamily.

It localises to the cytoplasm. It catalyses the reaction phosphoenolpyruvate + UDP-N-acetyl-alpha-D-glucosamine = UDP-N-acetyl-3-O-(1-carboxyvinyl)-alpha-D-glucosamine + phosphate. Its pathway is cell wall biogenesis; peptidoglycan biosynthesis. Cell wall formation. Adds enolpyruvyl to UDP-N-acetylglucosamine. The polypeptide is UDP-N-acetylglucosamine 1-carboxyvinyltransferase (Orientia tsutsugamushi (strain Ikeda) (Rickettsia tsutsugamushi)).